The sequence spans 379 residues: Homoserine O-succinyltransferase (379 aa).

Positions 51–360 (NAVLICHALS…DAPQGHDAFL (310 aa)) constitute an AB hydrolase-1 domain. Ser-157 acts as the Nucleophile in catalysis. Residue Arg-227 coordinates substrate. Catalysis depends on residues Asp-323 and His-356. Position 357 (Asp-357) interacts with substrate.

It belongs to the AB hydrolase superfamily. MetX family. Homodimer.

The protein resides in the cytoplasm. The catalysed reaction is L-homoserine + succinyl-CoA = O-succinyl-L-homoserine + CoA. Its pathway is amino-acid biosynthesis; L-methionine biosynthesis via de novo pathway; O-succinyl-L-homoserine from L-homoserine: step 1/1. Functionally, transfers a succinyl group from succinyl-CoA to L-homoserine, forming succinyl-L-homoserine. The sequence is that of Homoserine O-succinyltransferase from Pseudomonas aeruginosa (strain LESB58).